The primary structure comprises 247 residues: 4-hydroxy-tetrahydrodipicolinate reductase (247 aa).

NAD(+) is bound by residues 9-14 (GAAGRM), 76-78 (GTT), and 103-106 (APNF). Residue His133 is the Proton donor/acceptor of the active site. A (S)-2,3,4,5-tetrahydrodipicolinate-binding site is contributed by His134. The Proton donor role is filled by Lys137. 143–144 (GT) serves as a coordination point for (S)-2,3,4,5-tetrahydrodipicolinate.

Belongs to the DapB family.

The protein localises to the cytoplasm. The enzyme catalyses (S)-2,3,4,5-tetrahydrodipicolinate + NAD(+) + H2O = (2S,4S)-4-hydroxy-2,3,4,5-tetrahydrodipicolinate + NADH + H(+). It carries out the reaction (S)-2,3,4,5-tetrahydrodipicolinate + NADP(+) + H2O = (2S,4S)-4-hydroxy-2,3,4,5-tetrahydrodipicolinate + NADPH + H(+). Its pathway is amino-acid biosynthesis; L-lysine biosynthesis via DAP pathway; (S)-tetrahydrodipicolinate from L-aspartate: step 4/4. Catalyzes the conversion of 4-hydroxy-tetrahydrodipicolinate (HTPA) to tetrahydrodipicolinate. This Beutenbergia cavernae (strain ATCC BAA-8 / DSM 12333 / CCUG 43141 / JCM 11478 / NBRC 16432 / NCIMB 13614 / HKI 0122) protein is 4-hydroxy-tetrahydrodipicolinate reductase.